The primary structure comprises 303 residues: N-acetylmuramic acid 6-phosphate etherase (303 aa).

The 164-residue stretch at I62–K225 folds into the SIS domain. The Proton donor role is filled by E90. E121 is a catalytic residue.

The protein belongs to the GCKR-like family. MurNAc-6-P etherase subfamily. In terms of assembly, homodimer.

It carries out the reaction N-acetyl-D-muramate 6-phosphate + H2O = N-acetyl-D-glucosamine 6-phosphate + (R)-lactate. Its pathway is amino-sugar metabolism; 1,6-anhydro-N-acetylmuramate degradation. It functions in the pathway amino-sugar metabolism; N-acetylmuramate degradation. It participates in cell wall biogenesis; peptidoglycan recycling. Functionally, specifically catalyzes the cleavage of the D-lactyl ether substituent of MurNAc 6-phosphate, producing GlcNAc 6-phosphate and D-lactate. Together with AnmK, is also required for the utilization of anhydro-N-acetylmuramic acid (anhMurNAc) either imported from the medium or derived from its own cell wall murein, and thus plays a role in cell wall recycling. The polypeptide is N-acetylmuramic acid 6-phosphate etherase (Histophilus somni (strain 129Pt) (Haemophilus somnus)).